Consider the following 580-residue polypeptide: UPF0329 protein ECU06_0080 (580 aa).

Basic and acidic residues predominate over residues 308–330; that stretch reads RQKRREREMEKSMKELLRDEEKA. Residues 308–384 form a disordered region; that stretch reads RQKRREREME…KTGKKSKGGR (77 aa). Residues 331 to 340 are compositionally biased toward basic residues; the sequence is KSKKGRKKKS. Positions 351 to 363 are enriched in acidic residues; the sequence is SETEEVEASEEME. Residues 372-384 are compositionally biased toward basic residues; the sequence is ARRKTGKKSKGGR.

Belongs to the UPF0329 family.

This chain is UPF0329 protein ECU06_0080, found in Encephalitozoon cuniculi (strain GB-M1) (Microsporidian parasite).